We begin with the raw amino-acid sequence, 345 residues long: GTP 3',8-cyclase (345 aa).

Residues 10-236 (SHGRPLGVLR…QCVSSHWPLD (227 aa)) form the Radical SAM core domain. Arg19 provides a ligand contact to GTP. [4Fe-4S] cluster is bound by residues Cys26 and Cys30. Residue Tyr32 coordinates S-adenosyl-L-methionine. Cys33 contacts [4Fe-4S] cluster. Arg65 is a GTP binding site. Residue Gly69 coordinates S-adenosyl-L-methionine. Residue Thr98 coordinates GTP. Ser123 lines the S-adenosyl-L-methionine pocket. GTP is bound at residue Lys172. Residue Met206 coordinates S-adenosyl-L-methionine. [4Fe-4S] cluster is bound by residues Cys269 and Cys272. 274 to 276 (RIR) serves as a coordination point for GTP. Cys286 lines the [4Fe-4S] cluster pocket.

This sequence belongs to the radical SAM superfamily. MoaA family. In terms of assembly, monomer and homodimer. It depends on [4Fe-4S] cluster as a cofactor.

The catalysed reaction is GTP + AH2 + S-adenosyl-L-methionine = (8S)-3',8-cyclo-7,8-dihydroguanosine 5'-triphosphate + 5'-deoxyadenosine + L-methionine + A + H(+). It participates in cofactor biosynthesis; molybdopterin biosynthesis. Functionally, catalyzes the cyclization of GTP to (8S)-3',8-cyclo-7,8-dihydroguanosine 5'-triphosphate. The polypeptide is GTP 3',8-cyclase (Synechococcus sp. (strain CC9902)).